A 544-amino-acid chain; its full sequence is Glutamyl-tRNA(Gln) amidotransferase subunit B, chloroplastic/mitochondrial (544 aa).

The protein belongs to the GatB/GatE family. GatB subfamily. Subunit of the heterotrimeric GatCAB amidotransferase (AdT) complex, composed of A, B and C subunits.

It localises to the mitochondrion. Its subcellular location is the plastid. It is found in the chloroplast. The catalysed reaction is L-glutamyl-tRNA(Gln) + L-glutamine + ATP + H2O = L-glutaminyl-tRNA(Gln) + L-glutamate + ADP + phosphate + H(+). Its function is as follows. Allows the formation of correctly charged Gln-tRNA(Gln) through the transamidation of misacylated Glu-tRNA(Gln) in chloroplasts and mitochondria. The reaction takes place in the presence of glutamine and ATP through an activated gamma-phospho-Glu-tRNA(Gln). This chain is Glutamyl-tRNA(Gln) amidotransferase subunit B, chloroplastic/mitochondrial, found in Oryza sativa subsp. japonica (Rice).